Consider the following 202-residue polypeptide: NADH-quinone oxidoreductase subunit C (202 aa).

It belongs to the complex I 30 kDa subunit family. NDH-1 is composed of 14 different subunits. Subunits NuoB, C, D, E, F, and G constitute the peripheral sector of the complex.

The protein resides in the cell inner membrane. The enzyme catalyses a quinone + NADH + 5 H(+)(in) = a quinol + NAD(+) + 4 H(+)(out). Functionally, NDH-1 shuttles electrons from NADH, via FMN and iron-sulfur (Fe-S) centers, to quinones in the respiratory chain. The immediate electron acceptor for the enzyme in this species is believed to be ubiquinone. Couples the redox reaction to proton translocation (for every two electrons transferred, four hydrogen ions are translocated across the cytoplasmic membrane), and thus conserves the redox energy in a proton gradient. This is NADH-quinone oxidoreductase subunit C from Brucella canis (strain ATCC 23365 / NCTC 10854 / RM-666).